We begin with the raw amino-acid sequence, 358 residues long: Peptide chain release factor 1 (358 aa).

Gln-235 bears the N5-methylglutamine mark.

The protein belongs to the prokaryotic/mitochondrial release factor family. Post-translationally, methylated by PrmC. Methylation increases the termination efficiency of RF1.

The protein resides in the cytoplasm. In terms of biological role, peptide chain release factor 1 directs the termination of translation in response to the peptide chain termination codons UAG and UAA. This is Peptide chain release factor 1 from Neisseria gonorrhoeae (strain ATCC 700825 / FA 1090).